A 355-amino-acid chain; its full sequence is Peptide chain release factor 1 (355 aa).

Gln-233 is modified (N5-methylglutamine).

This sequence belongs to the prokaryotic/mitochondrial release factor family. Methylated by PrmC. Methylation increases the termination efficiency of RF1.

Its subcellular location is the cytoplasm. Peptide chain release factor 1 directs the termination of translation in response to the peptide chain termination codons UAG and UAA. The polypeptide is Peptide chain release factor 1 (Bacillus cereus (strain ATCC 14579 / DSM 31 / CCUG 7414 / JCM 2152 / NBRC 15305 / NCIMB 9373 / NCTC 2599 / NRRL B-3711)).